A 337-amino-acid polypeptide reads, in one-letter code: uncharacterized protein (337 aa).

The protein belongs to the NAD(P)-dependent epimerase/dehydratase family.

This is an uncharacterized protein from Escherichia coli (strain K12).